The chain runs to 131 residues: Olfactory receptor-like protein COR9 (131 aa).

Topologically, residues 1-16 are cytoplasmic; it reads VAICSPLLYSTVMTKR. Residues 17–41 traverse the membrane as a helical segment; sequence VCMQLVVGSYMGGLLNSLTHTCGLL. Residues 42–82 are Extracellular-facing; it reads GLPFCGPNVINHYFCDIPPLLQLACSDTHRNETLLLAFSAV. Asparagine 72 carries an N-linked (GlcNAc...) asparagine glycan. Residues 83–103 form a helical membrane-spanning segment; the sequence is IALFTLFVITASYMLILSVIL. Residues 104-116 lie on the Cytoplasmic side of the membrane; sequence KIQSDDGRKKTFH. The chain crosses the membrane as a helical span at residues 117 to 131; sequence TCASHLTAITIFFGS.

Belongs to the G-protein coupled receptor 1 family.

The protein resides in the cell membrane. Functionally, odorant receptor. In Gallus gallus (Chicken), this protein is Olfactory receptor-like protein COR9 (COR9).